A 187-amino-acid polypeptide reads, in one-letter code: Ribosome-recycling factor (187 aa).

This sequence belongs to the RRF family.

The protein resides in the cytoplasm. In terms of biological role, responsible for the release of ribosomes from messenger RNA at the termination of protein biosynthesis. May increase the efficiency of translation by recycling ribosomes from one round of translation to another. This chain is Ribosome-recycling factor, found in Parvibaculum lavamentivorans (strain DS-1 / DSM 13023 / NCIMB 13966).